The chain runs to 307 residues: Thymidylate synthase (307 aa).

The tract at residues 1-22 (MLVEGSELQSGAQQPRTEAPQH) is disordered. Residues 7–16 (ELQSGAQQPR) show a composition bias toward polar residues. Arg44 contributes to the dUMP binding site. Ser108 is modified (phosphoserine). DUMP is bound by residues 169 to 170 (RR), 189 to 190 (CH), 209 to 212 (RSGD), Asn220, and 250 to 252 (HIY). Cys189 (nucleophile) is an active-site residue. Asp212 contributes to the (6R)-5,10-methylene-5,6,7,8-tetrahydrofolate binding site. Residues Lys286 and Lys302 each participate in a glycyl lysine isopeptide (Lys-Gly) (interchain with G-Cter in SUMO2) cross-link. (6R)-5,10-methylene-5,6,7,8-tetrahydrofolate is bound at residue Ala306.

The protein belongs to the thymidylate synthase family. As to quaternary structure, homodimer.

It is found in the nucleus. The protein resides in the cytoplasm. It localises to the mitochondrion. The protein localises to the mitochondrion matrix. Its subcellular location is the mitochondrion inner membrane. It catalyses the reaction dUMP + (6R)-5,10-methylene-5,6,7,8-tetrahydrofolate = 7,8-dihydrofolate + dTMP. It participates in pyrimidine metabolism; dTTP biosynthesis. In terms of biological role, catalyzes the reductive methylation of 2'-deoxyuridine 5'-monophosphate (dUMP) to thymidine 5'-monophosphate (dTMP), using the cosubstrate, 5,10- methylenetetrahydrofolate (CH2H4folate) as a 1-carbon donor and reductant and contributes to the de novo mitochondrial thymidylate biosynthesis pathway. The protein is Thymidylate synthase (Tyms) of Rattus norvegicus (Rat).